Consider the following 307-residue polypeptide: HPr kinase/phosphorylase (307 aa).

Active-site residues include His-136 and Lys-157. An ATP-binding site is contributed by 151 to 158; sequence GESGIGKS. Position 158 (Ser-158) interacts with Mg(2+). Asp-175 acts as the Proton acceptor; for phosphorylation activity. Proton donor; for dephosphorylation activity in catalysis. Residues 198 to 207 are important for the catalytic mechanism of both phosphorylation and dephosphorylation; sequence LEVRGMGIID. Glu-199 is a binding site for Mg(2+). The active site involves Arg-240. Residues 261 to 266 form an important for the catalytic mechanism of dephosphorylation region; the sequence is PIRPGR.

Belongs to the HPrK/P family. Homohexamer. The cofactor is Mg(2+).

It catalyses the reaction [HPr protein]-L-serine + ATP = [HPr protein]-O-phospho-L-serine + ADP + H(+). The enzyme catalyses [HPr protein]-O-phospho-L-serine + phosphate + H(+) = [HPr protein]-L-serine + diphosphate. Functionally, catalyzes the ATP- as well as the pyrophosphate-dependent phosphorylation of a specific serine residue in HPr, a phosphocarrier protein of the phosphoenolpyruvate-dependent sugar phosphotransferase system (PTS). HprK/P also catalyzes the pyrophosphate-producing, inorganic phosphate-dependent dephosphorylation (phosphorolysis) of seryl-phosphorylated HPr (P-Ser-HPr). The two antagonistic activities of HprK/P are regulated by several intracellular metabolites, which change their concentration in response to the absence or presence of rapidly metabolisable carbon sources (glucose, fructose, etc.) in the growth medium. Therefore, by controlling the phosphorylation state of HPr, HPrK/P is a sensor enzyme that plays a major role in the regulation of carbon metabolism and sugar transport: it mediates carbon catabolite repression (CCR), and regulates PTS-catalyzed carbohydrate uptake and inducer exclusion. The sequence is that of HPr kinase/phosphorylase from Clostridium perfringens (strain 13 / Type A).